We begin with the raw amino-acid sequence, 1488 residues long: Chromosome partition protein MukB (1488 aa).

34–41 (GGNGAGKS) is an ATP binding site. Coiled-coil stretches lie at residues 326–418 (LEAD…QYNQ), 444–472 (LDTF…QTAH), and 509–602 (RHLA…QRAP). The interval 666-783 (PGGAEDQRLN…SLPIFGRAAR (118 aa)) is flexible hinge. Coiled coils occupy residues 835–923 (EAEI…AKLE), 977–1116 (EMLS…AKAG), and 1209–1265 (VEAI…LQSV). The interval 1049–1074 (ADSGAEERARQRRDELHAQLSNNRSR) is disordered. The segment covering 1051 to 1065 (SGAEERARQRRDELH) has biased composition (basic and acidic residues).

It belongs to the SMC family. MukB subfamily. As to quaternary structure, homodimerization via its hinge domain. Binds to DNA via its C-terminal region. Interacts, and probably forms a ternary complex, with MukE and MukF via its C-terminal region. The complex formation is stimulated by calcium or magnesium. Interacts with tubulin-related protein FtsZ.

It localises to the cytoplasm. It is found in the nucleoid. In terms of biological role, plays a central role in chromosome condensation, segregation and cell cycle progression. Functions as a homodimer, which is essential for chromosome partition. Involved in negative DNA supercoiling in vivo, and by this means organize and compact chromosomes. May achieve or facilitate chromosome segregation by condensation DNA from both sides of a centrally located replisome during cell division. The chain is Chromosome partition protein MukB from Salmonella gallinarum (strain 287/91 / NCTC 13346).